The primary structure comprises 429 residues: MSAIVDIIAREILDSRGNPTVEADVLLESGVMGRAAVPSGASTGSREAIELRDGDAARYLGKGVLQAVENVNTEISETLIGLDAEEQAFIDRTLIELDGTENKSRLGANATLAVSMAIAKAAAEEAGLPLYRYFGGSGPMAMPVPMMNVINGGAHANNSLDIQECMIMPVSMTSFREALRCGAEIFHHLKKLTDKKGYPTTVGDEGGFAPNVGGTEEALNMIQDAIAAAGYEPGRDVLLALDCAASEFYKDGQYVLAGEGLTLSSEGFADYLATLADRFPIVSIEDGMAENDWAGWKTLTDKLGRRLQLVGDDLFVTNTRILEQGIDQGVANSILIKINQIGTLSETFAAVEMAKRAGYTAVISHRSGETEDSTIADIAVGLNAMQIKTGSLSRSDRISKYNQLLRIEEDLGDTVSYPGRRAFYNLRVR.

Gln163 lines the (2R)-2-phosphoglycerate pocket. Glu205 (proton donor) is an active-site residue. Mg(2+) contacts are provided by Asp242, Glu285, and Asp312. (2R)-2-phosphoglycerate contacts are provided by Lys337, Arg366, Ser367, and Lys388. Residue Lys337 is the Proton acceptor of the active site.

It belongs to the enolase family. The cofactor is Mg(2+).

It is found in the cytoplasm. The protein localises to the secreted. Its subcellular location is the cell surface. It carries out the reaction (2R)-2-phosphoglycerate = phosphoenolpyruvate + H2O. It functions in the pathway carbohydrate degradation; glycolysis; pyruvate from D-glyceraldehyde 3-phosphate: step 4/5. Its function is as follows. Catalyzes the reversible conversion of 2-phosphoglycerate (2-PG) into phosphoenolpyruvate (PEP). It is essential for the degradation of carbohydrates via glycolysis. This Aromatoleum aromaticum (strain DSM 19018 / LMG 30748 / EbN1) (Azoarcus sp. (strain EbN1)) protein is Enolase.